Reading from the N-terminus, the 453-residue chain is GTPase Der (453 aa).

EngA-type G domains follow at residues 3-178 (PKIA…PNNE) and 190-363 (LKLA…LECS). GTP contacts are provided by residues 9–16 (GRPNVGKS), 57–61 (DTGGV), 130–133 (NKVD), 196–203 (GRPNAGKS), 243–247 (DTAGI), and 308–311 (NKTD). One can recognise a KH-like domain in the interval 364–448 (TRINTGVLNR…PIRIRLRSSH (85 aa)).

The protein belongs to the TRAFAC class TrmE-Era-EngA-EngB-Septin-like GTPase superfamily. EngA (Der) GTPase family. As to quaternary structure, associates with the 50S ribosomal subunit.

In terms of biological role, GTPase that plays an essential role in the late steps of ribosome biogenesis. This Lawsonia intracellularis (strain PHE/MN1-00) protein is GTPase Der.